The primary structure comprises 108 residues: Integration host factor subunit alpha (108 aa).

This sequence belongs to the bacterial histone-like protein family. As to quaternary structure, heterodimer of an alpha and a beta chain.

Its function is as follows. This protein is one of the two subunits of integration host factor, a specific DNA-binding protein that functions in genetic recombination as well as in transcriptional and translational control. The chain is Integration host factor subunit alpha from Rhodopseudomonas palustris (strain BisB18).